A 120-amino-acid chain; its full sequence is Small ribosomal subunit protein uS12 (120 aa).

At aspartate 88 the chain carries 3-methylthioaspartic acid.

This sequence belongs to the universal ribosomal protein uS12 family. In terms of assembly, part of the 30S ribosomal subunit. Contacts proteins S8 and S17. May interact with IF1 in the 30S initiation complex.

Its function is as follows. With S4 and S5 plays an important role in translational accuracy. In terms of biological role, interacts with and stabilizes bases of the 16S rRNA that are involved in tRNA selection in the A site and with the mRNA backbone. Located at the interface of the 30S and 50S subunits, it traverses the body of the 30S subunit contacting proteins on the other side and probably holding the rRNA structure together. The combined cluster of proteins S8, S12 and S17 appears to hold together the shoulder and platform of the 30S subunit. In Carsonella ruddii (strain PV), this protein is Small ribosomal subunit protein uS12.